The primary structure comprises 186 residues: Protein TRL14 (186 aa).

Asn-24, Asn-64, and Asn-72 each carry an N-linked (GlcNAc...) asparagine; by host glycan. Residues 143 to 163 (HAVWAGVVVSVALIALYMGSH) traverse the membrane as a helical segment.

The protein belongs to the RL11 family.

The protein resides in the virion membrane. The protein is Protein TRL14 of Human cytomegalovirus (strain AD169) (HHV-5).